We begin with the raw amino-acid sequence, 409 residues long: NADH-quinone oxidoreductase subunit D (409 aa).

Belongs to the complex I 49 kDa subunit family. NDH-1 is composed of 14 different subunits. Subunits NuoB, C, D, E, F, and G constitute the peripheral sector of the complex.

The protein resides in the cell inner membrane. It carries out the reaction a quinone + NADH + 5 H(+)(in) = a quinol + NAD(+) + 4 H(+)(out). In terms of biological role, NDH-1 shuttles electrons from NADH, via FMN and iron-sulfur (Fe-S) centers, to quinones in the respiratory chain. The immediate electron acceptor for the enzyme in this species is believed to be ubiquinone. Couples the redox reaction to proton translocation (for every two electrons transferred, four hydrogen ions are translocated across the cytoplasmic membrane), and thus conserves the redox energy in a proton gradient. In Helicobacter acinonychis (strain Sheeba), this protein is NADH-quinone oxidoreductase subunit D.